Consider the following 199-residue polypeptide: V-type ATP synthase subunit E (199 aa).

It belongs to the V-ATPase E subunit family.

Produces ATP from ADP in the presence of a proton gradient across the membrane. This Borreliella afzelii (strain PKo) (Borrelia afzelii) protein is V-type ATP synthase subunit E.